The primary structure comprises 38 residues: GVPINVKCSGSRDCLEPCKKAGMRFGKCINRKCHCTPK.

3 cysteine pairs are disulfide-bonded: Cys8-Cys28, Cys14-Cys33, and Cys18-Cys35.

Belongs to the short scorpion toxin superfamily. Potassium channel inhibitor family. Alpha-KTx 03 subfamily. Expressed by the venom gland.

It localises to the secreted. Completely inhibits the (125)I-kaliotoxin binding on rat brain synaptosomes with high-affinity (IC(50)=0.1 nM). Is a potent Kv1.3/KCNA3 ligand. The chain is Potassium channel toxin alpha-KTx 3.17 from Buthus paris (Scorpion).